The sequence spans 856 residues: Phosphoenolpyruvate synthase (856 aa).

Histidine 433 (tele-phosphohistidine intermediate) is an active-site residue. Arginine 523, arginine 636, glutamate 738, glycine 759, serine 760, asparagine 761, and aspartate 762 together coordinate substrate. Glutamate 738 is a binding site for Mg(2+). Aspartate 762 contributes to the Mg(2+) binding site. Catalysis depends on cysteine 809, which acts as the Proton donor.

Belongs to the PEP-utilizing enzyme family. Mg(2+) serves as cofactor.

It carries out the reaction pyruvate + ATP + H2O = phosphoenolpyruvate + AMP + phosphate + 2 H(+). It functions in the pathway carbohydrate biosynthesis; gluconeogenesis. Its function is as follows. Catalyzes the phosphorylation of pyruvate to phosphoenolpyruvate. The chain is Phosphoenolpyruvate synthase (ppsA) from Aquifex aeolicus (strain VF5).